The sequence spans 82 residues: Penaeidin-3i (82 aa).

The N-terminal stretch at 1–19 (MRLVVCLVFLASFALVCQG) is a signal peptide. Glutamine 20 carries the post-translational modification Pyrrolidone carboxylic acid. Intrachain disulfides connect cysteine 55–cysteine 73 and cysteine 67–cysteine 74. Serine 81 bears the Serine amide mark.

The protein belongs to the penaeidin family.

It localises to the cytoplasmic granule. In terms of biological role, antibacterial and antifungal activity. Presents chitin-binding activity. This is Penaeidin-3i from Penaeus vannamei (Whiteleg shrimp).